Consider the following 362-residue polypeptide: 2-oxoglutarate-dependent dioxygenase lolO1 (362 aa).

The 114-residue stretch at 199-312 (TWNYFLGQPV…RYSLVFFGHL (114 aa)) folds into the Fe2OG dioxygenase domain. Fe cation contacts are provided by H222, D224, and H280. A 2-oxoglutarate-binding site is contributed by R303.

The protein belongs to the iron/ascorbate-dependent oxidoreductase family. Requires Fe(2+) as cofactor.

It participates in alkaloid biosynthesis. 2-oxoglutarate-dependent dioxygenase; part of the gene cluster that mediates the biosynthesis of loline alkaloids, potent insecticidal agents composed of a pyrrolizidine ring system and an uncommon ether bridge linking carbons 2 and 7. Lolines are structurally differentiated by the various modifications of the L-amino group and include norloline, loline, N-methylloline, N-acetylloline, N-acetylnorloline, and N-formylloline. The first committed step is the condensation of O-acetyl-L-homoserine (derived from L-aspartic acid) and L-proline, probably catalyzed by the gamma-type pyridoxal 5'-phosphate(PLP)-dependent enzyme lolC, to give the diamino diacid, NACPP. Ensuing cyclization, decarboxylation, and acetylation steps yield 1-exo-acetamidopyrrolizidine (AcAP). LolO is required for installation of the ether bridge upon the pathway intermediate, 1-exo-acetamidopyrrolizidine (AcAP). In sequential 2-oxoglutarate- and O(2)-consuming steps, lolO removes hydrogens from C2 and C7 of AcAP to form both carbon-oxygen bonds in N-acetylnorloline (NANL), the precursor to all other lolines. The enzymes lolD, lolE, lolF and lolT have also been proposed to be involved in the ether-bridge installation. Further processing of the exocyclic moiety of NANL by fungal N-acetamidase (LolN), methyltransferase (LolM), and cytochrome P450 (LolP) enzymes, with occasional involvement of a plant acetyltransferase, generates the other known lolines. LolN transforms NANL to norlonine which is monomethylated and dimethylated to respectively lonine and N-methyllonine (NML) by lolM. LolP catalyzes hydroxylation of the methyl group in N-methylloline (NML) and further oxygenation to N-formylloline (NFL). A plant acetyltransferase is responsible for the acetylation of loline to form N-acetylloline (NAL). LolA might interact with aspartate kinase to prevent feedback inhibition of its activity by these end products and thereby promote production of l-homoserine from l-aspartate. In Epichloe uncinata (Endophyte fungus), this protein is 2-oxoglutarate-dependent dioxygenase lolO1.